A 160-amino-acid polypeptide reads, in one-letter code: 3-hydroxyacyl-[acyl-carrier-protein] dehydratase FabZ (160 aa).

His60 is an active-site residue.

It belongs to the thioester dehydratase family. FabZ subfamily.

The protein resides in the cytoplasm. The enzyme catalyses a (3R)-hydroxyacyl-[ACP] = a (2E)-enoyl-[ACP] + H2O. Involved in unsaturated fatty acids biosynthesis. Catalyzes the dehydration of short chain beta-hydroxyacyl-ACPs and long chain saturated and unsaturated beta-hydroxyacyl-ACPs. The sequence is that of 3-hydroxyacyl-[acyl-carrier-protein] dehydratase FabZ from Rhodospirillum rubrum (strain ATCC 11170 / ATH 1.1.1 / DSM 467 / LMG 4362 / NCIMB 8255 / S1).